A 1373-amino-acid chain; its full sequence is DNA-directed RNA polymerase subunit beta (1373 aa).

It belongs to the RNA polymerase beta chain family. As to quaternary structure, the RNAP catalytic core consists of 2 alpha, 1 beta, 1 beta' and 1 omega subunit. When a sigma factor is associated with the core the holoenzyme is formed, which can initiate transcription.

It catalyses the reaction RNA(n) + a ribonucleoside 5'-triphosphate = RNA(n+1) + diphosphate. DNA-dependent RNA polymerase catalyzes the transcription of DNA into RNA using the four ribonucleoside triphosphates as substrates. In Rickettsia rickettsii (strain Iowa), this protein is DNA-directed RNA polymerase subunit beta.